A 171-amino-acid chain; its full sequence is Lipoprotein signal peptidase (171 aa).

The next 3 helical transmembrane spans lie at 12-32 (WYWV…WVLA), 67-87 (WQRW…TVWL), and 93-113 (SLLK…GNLV). Active-site residues include D123 and D141. A helical membrane pass occupies residues 137-157 (FNIADSAICIGAVLIIWDAFL).

It belongs to the peptidase A8 family.

It is found in the cell inner membrane. The catalysed reaction is Release of signal peptides from bacterial membrane prolipoproteins. Hydrolyzes -Xaa-Yaa-Zaa-|-(S,diacylglyceryl)Cys-, in which Xaa is hydrophobic (preferably Leu), and Yaa (Ala or Ser) and Zaa (Gly or Ala) have small, neutral side chains.. Its pathway is protein modification; lipoprotein biosynthesis (signal peptide cleavage). Functionally, this protein specifically catalyzes the removal of signal peptides from prolipoproteins. The sequence is that of Lipoprotein signal peptidase from Shewanella baltica (strain OS195).